Here is a 393-residue protein sequence, read N- to C-terminus: FAD-dependent monooxygenase dbaB (393 aa).

The first 23 residues, 1–23, serve as a signal peptide directing secretion; that stretch reads MTRTSPTLPVIILGAGMVGLTLA. E37 and R107 together coordinate FAD. N128 carries N-linked (GlcNAc...) asparagine glycosylation. Y221 is a catalytic residue. N233 carries an N-linked (GlcNAc...) asparagine glycan. D320 lines the FAD pocket.

This sequence belongs to the paxM FAD-dependent monooxygenase family. FAD is required as a cofactor.

The protein operates within secondary metabolite biosynthesis. Functionally, FAD-dependent monooxygenase; part of the gene cluster that mediates the biosynthesis of the antibiotic 2,4-dihydroxy-3-methyl-6-(2-oxopropyl)benzaldehyde (DHMBA) and its derivatives. The direct non-reducing polyketide synthase dbaI product is 2,4-dihydroxy-3-methyl-6-(2-oxopropyl)benzaldehyde (DHMBA), produced by condensation of one acetyl-CoA starter unit with 4 malonyl-CoA units and one methylation step. The FAD-dependent monooxygenase dbaH is responsible for the synthesis of yellow pigments derived from the oxidation of DHMBA. The roles of dbaB, C, E and F have still to be determined. The polypeptide is FAD-dependent monooxygenase dbaB (Emericella nidulans (strain FGSC A4 / ATCC 38163 / CBS 112.46 / NRRL 194 / M139) (Aspergillus nidulans)).